Consider the following 165-residue polypeptide: 2-C-methyl-D-erythritol 2,4-cyclodiphosphate synthase (165 aa).

Aspartate 8 and histidine 10 together coordinate a divalent metal cation. 4-CDP-2-C-methyl-D-erythritol 2-phosphate-binding positions include 8 to 10 (DVH) and 34 to 35 (HS). Residue histidine 42 participates in a divalent metal cation binding. 4-CDP-2-C-methyl-D-erythritol 2-phosphate contacts are provided by residues 56–58 (DIG), 61–65 (FPDTD), 132–135 (TTTE), phenylalanine 139, and arginine 142.

This sequence belongs to the IspF family. As to quaternary structure, homotrimer. The cofactor is a divalent metal cation.

The catalysed reaction is 4-CDP-2-C-methyl-D-erythritol 2-phosphate = 2-C-methyl-D-erythritol 2,4-cyclic diphosphate + CMP. The protein operates within isoprenoid biosynthesis; isopentenyl diphosphate biosynthesis via DXP pathway; isopentenyl diphosphate from 1-deoxy-D-xylulose 5-phosphate: step 4/6. Its function is as follows. Involved in the biosynthesis of isopentenyl diphosphate (IPP) and dimethylallyl diphosphate (DMAPP), two major building blocks of isoprenoid compounds. Catalyzes the conversion of 4-diphosphocytidyl-2-C-methyl-D-erythritol 2-phosphate (CDP-ME2P) to 2-C-methyl-D-erythritol 2,4-cyclodiphosphate (ME-CPP) with a corresponding release of cytidine 5-monophosphate (CMP). The protein is 2-C-methyl-D-erythritol 2,4-cyclodiphosphate synthase of Halothermothrix orenii (strain H 168 / OCM 544 / DSM 9562).